We begin with the raw amino-acid sequence, 82 residues long: Small ribosomal subunit protein bS18 (82 aa).

Residues 1 to 20 form a disordered region; the sequence is MVDINQIPTRRPFHRRRKTC.

The protein belongs to the bacterial ribosomal protein bS18 family. In terms of assembly, part of the 30S ribosomal subunit. Forms a tight heterodimer with protein bS6.

Functionally, binds as a heterodimer with protein bS6 to the central domain of the 16S rRNA, where it helps stabilize the platform of the 30S subunit. The protein is Small ribosomal subunit protein bS18 of Mesorhizobium japonicum (strain LMG 29417 / CECT 9101 / MAFF 303099) (Mesorhizobium loti (strain MAFF 303099)).